Consider the following 218-residue polypeptide: Octanoyltransferase (218 aa).

Residues 32–214 (ALTPDEIWLV…HFTQLLGYND (183 aa)) form the BPL/LPL catalytic domain. Substrate contacts are provided by residues 71-78 (RGGQITYH), 143-145 (SLG), and 156-158 (GLA). Cys174 (acyl-thioester intermediate) is an active-site residue.

Belongs to the LipB family.

The protein resides in the cytoplasm. It carries out the reaction octanoyl-[ACP] + L-lysyl-[protein] = N(6)-octanoyl-L-lysyl-[protein] + holo-[ACP] + H(+). The protein operates within protein modification; protein lipoylation via endogenous pathway; protein N(6)-(lipoyl)lysine from octanoyl-[acyl-carrier-protein]: step 1/2. Catalyzes the transfer of endogenously produced octanoic acid from octanoyl-acyl-carrier-protein onto the lipoyl domains of lipoate-dependent enzymes. Lipoyl-ACP can also act as a substrate although octanoyl-ACP is likely to be the physiological substrate. The chain is Octanoyltransferase from Histophilus somni (strain 129Pt) (Haemophilus somnus).